The following is a 122-amino-acid chain: MSHDRRLTVGSLLPNQPRPVAVPKAPSVVQPSKQPLPEKAIIRLEQNGRSFSVRHVKGNLLTEGLSQGLPLQYKCRKGTCGVCTVKVTDGASRLSLPNQQEHKKLQGNIKSGFRLACQANME.

The tract at residues 1 to 33 (MSHDRRLTVGSLLPNQPRPVAVPKAPSVVQPSK) is disordered. The targeting peptide stretch occupies residues 8–14 (TVGSLLP). One can recognise a 2Fe-2S ferredoxin-type domain in the interval 40–122 (AIIRLEQNGR…FRLACQANME (83 aa)). Residues cysteine 75, cysteine 80, cysteine 83, and cysteine 117 each coordinate [2Fe-2S] cluster.

This sequence belongs to the 2Fe2S plant-type ferredoxin family. The cofactor is [2Fe-2S] cluster.

Its subcellular location is the encapsulin nanocompartment. Its function is as follows. Cargo protein of a type 1 encapsulin nanocompartment. An iron-binding protein probably involved in iron mineralization in the encapsulin nanocompartment. 2 different cargo proteins have been identified (IMEF and Fer); when both are expressed in E.coli with the shell protein only IMEF is detected within the nanocompartment. E.coli expressing all 3 genes stores the largest amount of iron and is protected from Fe/H2O2-induced oxidative stress. The chain is Ferredoxin from Bacillus thermotolerans (Quasibacillus thermotolerans).